A 227-amino-acid chain; its full sequence is Cytochrome c oxidase subunit 2 (227 aa).

Residues 1-14 (MAYPFELGFQDATS) lie on the Mitochondrial intermembrane side of the membrane. A helical transmembrane segment spans residues 15–45 (PIMEELLHFHDHTLMIVFLISSLVLYIISLM). Topologically, residues 46 to 59 (LTTKLTHTSTMDAQ) are mitochondrial matrix. A helical membrane pass occupies residues 60-87 (EVETIWTILPAIILILIALPSLRILYMM). The Mitochondrial intermembrane portion of the chain corresponds to 88 to 227 (DEINDPSLTV…HFENWSSSML (140 aa)). Cu cation contacts are provided by His-161, Cys-196, Glu-198, Cys-200, His-204, and Met-207. Position 198 (Glu-198) interacts with Mg(2+).

Belongs to the cytochrome c oxidase subunit 2 family. As to quaternary structure, component of the cytochrome c oxidase (complex IV, CIV), a multisubunit enzyme composed of 14 subunits. The complex is composed of a catalytic core of 3 subunits MT-CO1, MT-CO2 and MT-CO3, encoded in the mitochondrial DNA, and 11 supernumerary subunits COX4I, COX5A, COX5B, COX6A, COX6B, COX6C, COX7A, COX7B, COX7C, COX8 and NDUFA4, which are encoded in the nuclear genome. The complex exists as a monomer or a dimer and forms supercomplexes (SCs) in the inner mitochondrial membrane with NADH-ubiquinone oxidoreductase (complex I, CI) and ubiquinol-cytochrome c oxidoreductase (cytochrome b-c1 complex, complex III, CIII), resulting in different assemblies (supercomplex SCI(1)III(2)IV(1) and megacomplex MCI(2)III(2)IV(2)). Found in a complex with TMEM177, COA6, COX18, COX20, SCO1 and SCO2. Interacts with TMEM177 in a COX20-dependent manner. Interacts with COX20. Interacts with COX16. The cofactor is Cu cation.

The protein resides in the mitochondrion inner membrane. The enzyme catalyses 4 Fe(II)-[cytochrome c] + O2 + 8 H(+)(in) = 4 Fe(III)-[cytochrome c] + 2 H2O + 4 H(+)(out). Its function is as follows. Component of the cytochrome c oxidase, the last enzyme in the mitochondrial electron transport chain which drives oxidative phosphorylation. The respiratory chain contains 3 multisubunit complexes succinate dehydrogenase (complex II, CII), ubiquinol-cytochrome c oxidoreductase (cytochrome b-c1 complex, complex III, CIII) and cytochrome c oxidase (complex IV, CIV), that cooperate to transfer electrons derived from NADH and succinate to molecular oxygen, creating an electrochemical gradient over the inner membrane that drives transmembrane transport and the ATP synthase. Cytochrome c oxidase is the component of the respiratory chain that catalyzes the reduction of oxygen to water. Electrons originating from reduced cytochrome c in the intermembrane space (IMS) are transferred via the dinuclear copper A center (CU(A)) of subunit 2 and heme A of subunit 1 to the active site in subunit 1, a binuclear center (BNC) formed by heme A3 and copper B (CU(B)). The BNC reduces molecular oxygen to 2 water molecules using 4 electrons from cytochrome c in the IMS and 4 protons from the mitochondrial matrix. The protein is Cytochrome c oxidase subunit 2 (MT-CO2) of Tamias amoenus (Yellow-pine chipmunk).